The chain runs to 72 residues: Conotoxin 3 (72 aa).

The N-terminal stretch at 1 to 22 is a signal peptide; sequence MKLTCVVIVAVLLLTACQLITA. Residues 23–46 constitute a propeptide that is removed on maturation; sequence DDSRGTQEHRALRSDTKLSMLTLR. 3 disulfide bridges follow: Cys47–Cys61, Cys54–Cys64, and Cys60–Cys71.

The protein belongs to the conotoxin O1 superfamily. As to expression, expressed by the venom duct.

Its subcellular location is the secreted. The protein is Conotoxin 3 of Conus striatus (Striated cone).